The following is a 162-amino-acid chain: Peptide deformylase-like (162 aa).

Belongs to the polypeptide deformylase family.

This is Peptide deformylase-like from Staphylococcus aureus (strain MRSA252).